The following is a 137-amino-acid chain: Large ribosomal subunit protein uL22 (137 aa).

It belongs to the universal ribosomal protein uL22 family. In terms of assembly, part of the 50S ribosomal subunit.

Its function is as follows. This protein binds specifically to 23S rRNA; its binding is stimulated by other ribosomal proteins, e.g. L4, L17, and L20. It is important during the early stages of 50S assembly. It makes multiple contacts with different domains of the 23S rRNA in the assembled 50S subunit and ribosome. Functionally, the globular domain of the protein is located near the polypeptide exit tunnel on the outside of the subunit, while an extended beta-hairpin is found that lines the wall of the exit tunnel in the center of the 70S ribosome. In Flavobacterium psychrophilum (strain ATCC 49511 / DSM 21280 / CIP 103535 / JIP02/86), this protein is Large ribosomal subunit protein uL22.